The sequence spans 238 residues: Putative ABC transporter ATP-binding protein AF_1841 (238 aa).

The ABC transporter domain maps to 8 to 238 (IEADSVSYDY…EELLEKAGVI (231 aa)). 41 to 48 (GANGSGKS) contributes to the ATP binding site.

Belongs to the ABC transporter superfamily.

The protein resides in the cell membrane. Functionally, probably part of an ABC transporter complex. Responsible for energy coupling to the transport system. The protein is Putative ABC transporter ATP-binding protein AF_1841 of Archaeoglobus fulgidus (strain ATCC 49558 / DSM 4304 / JCM 9628 / NBRC 100126 / VC-16).